A 300-amino-acid polypeptide reads, in one-letter code: F-box associated domain-containing protein sdz-33 (300 aa).

Positions 5-51 (PFPILCLPDFVLQKSLKLMGVVEHLCLSILSKNIKQLIATLKGYPKC) constitute an F-box domain.

Expressed in D-type motor neuron cell bodies.

Functionally, substrate recognition component of E3 ubiquitin-protein ligase complex which mediates the ubiquitination and subsequent proteasomal degradation of target proteins such as mdl-1. Positively regulates axon regeneration by targeting mdl-1 for ubiquitin-mediated degradation; probably thereby reducing levels of mdl-1-mxl-1 heterodimers, allowing free mxl-1 to form complexes with tdpt-1 and thus inhibiting tdpt-1-dependent sumoylation of ets-4. The polypeptide is F-box associated domain-containing protein sdz-33 (Caenorhabditis elegans).